Consider the following 480-residue polypeptide: Dihydrolipoyllysine-residue acetyltransferase component 4 of pyruvate dehydrogenase complex, chloroplastic (480 aa).

The N-terminal 53 residues, methionine 1–serine 53, are a transit peptide targeting the chloroplast. The region spanning isoleucine 55–glutamate 133 is the Lipoyl-binding domain. Position 96 is an N6-lipoyllysine (lysine 96). Disordered regions lie at residues lysine 140–proline 168 and alanine 224–alanine 245. Over residues lysine 142–valine 156 the composition is skewed to low complexity. The region spanning valine 187 to alanine 224 is the Peripheral subunit-binding (PSBD) domain. Pro residues predominate over residues alanine 234 to valine 243. Residue histidine 453 is part of the active site.

It belongs to the 2-oxoacid dehydrogenase family. (R)-lipoate serves as cofactor.

It localises to the plastid. Its subcellular location is the chloroplast stroma. It catalyses the reaction N(6)-[(R)-dihydrolipoyl]-L-lysyl-[protein] + acetyl-CoA = N(6)-[(R)-S(8)-acetyldihydrolipoyl]-L-lysyl-[protein] + CoA. In terms of biological role, the pyruvate dehydrogenase complex catalyzes the overall conversion of pyruvate to acetyl-CoA and CO(2). It contains multiple copies of three enzymatic components: pyruvate dehydrogenase (E1), dihydrolipoamide acetyltransferase (E2) and lipoamide dehydrogenase (E3). This chain is Dihydrolipoyllysine-residue acetyltransferase component 4 of pyruvate dehydrogenase complex, chloroplastic (LTA2), found in Arabidopsis thaliana (Mouse-ear cress).